Consider the following 481-residue polypeptide: Proton-coupled amino acid transporter 2 (481 aa).

Residues 1-56 lie on the Cytoplasmic side of the membrane; it reads MSVTKSAGSPQVAATVKLDLVSFPESAKKVQSQDPNPVNGSSSESSEKTKGITGFQ. Positions 26-49 are disordered; the sequence is SAKKVQSQDPNPVNGSSSESSEKT. A compositionally biased stretch (polar residues) spans 29–40; it reads KVQSQDPNPVNG. A helical membrane pass occupies residues 57–77; the sequence is TLVHLVKGNMGTGILGLPLAV. Residues 78 to 79 lie on the Extracellular side of the membrane; sequence KN. Residues 80–100 form a helical membrane-spanning segment; it reads AGILMGPLSLLVMGLIACHCM. The Cytoplasmic portion of the chain corresponds to 101 to 146; it reads HILVRCAQRFCHRLNKPFMDYGDTVMHGLASSPNTWLQSHAHWGRH. A helical membrane pass occupies residues 147–167; that stretch reads AVSFFLIVTQLGFCCVYIVFL. Residues 168 to 195 are Extracellular-facing; that stretch reads ADNLKQVVEAVNSTTISCHKNETVVLTP. The chain crosses the membrane as a helical span at residues 196 to 216; that stretch reads TIDSRLYMLAFLPVLGLLVFI. Over 217-220 the chain is Cytoplasmic; sequence RNLR. Residues 221 to 241 form a helical membrane-spanning segment; the sequence is VLTIFSLLANVSMLVSLVIIG. The Extracellular portion of the chain corresponds to 242–262; it reads QYIIQGIPDPSQLPLVASWKT. A helical transmembrane segment spans residues 263–283; sequence YPLFFGTAIFSFESIGVVLPL. Residues 284–295 lie on the Cytoplasmic side of the membrane; it reads ENKMKDARRFPT. The chain crosses the membrane as a helical span at residues 296–316; sequence ILSLGMSIITTLYIAIGALGY. At 317-343 the chain is on the extracellular side; the sequence is LRFGDDIKASITLNLPNCWLYQSVKLL. Residues 344-364 form a helical membrane-spanning segment; that stretch reads YVVGILCTHALQFYVPAEIII. At 365–377 the chain is on the cytoplasmic side; it reads PLAVSQVSKRWAL. The chain crosses the membrane as a helical span at residues 378–398; it reads PVDLSIRLALVCVTCMLAILI. The Extracellular portion of the chain corresponds to 399-402; sequence PRLD. The chain crosses the membrane as a helical span at residues 403–423; sequence LVLSLVGSVSSSALALIIPPL. Residues 424 to 444 lie on the Cytoplasmic side of the membrane; that stretch reads LEVTTYYGEGMSPLTITKDAL. Residues 445 to 465 form a helical membrane-spanning segment; the sequence is ISILGFMGFVVGTYQALDELI. The Extracellular portion of the chain corresponds to 466–481; sequence RSGNSLPLSNSTMFIQ.

It belongs to the amino acid/polyamine transporter 2 family. In terms of tissue distribution, expressed in lung and spleen, and to a lower extent in brain, heart, kidney and skeletal muscle.

It localises to the cell membrane. It is found in the endoplasmic reticulum membrane. Its subcellular location is the recycling endosome membrane. It catalyses the reaction glycine(in) + H(+)(in) = glycine(out) + H(+)(out). The enzyme catalyses L-alanine(in) + H(+)(in) = L-alanine(out) + H(+)(out). It carries out the reaction D-alanine(in) + H(+)(in) = D-alanine(out) + H(+)(out). The catalysed reaction is L-proline(out) + H(+)(out) = L-proline(in) + H(+)(in). It catalyses the reaction D-proline(out) + H(+)(out) = D-proline(in) + H(+)(in). The enzyme catalyses 4-hydroxy-L-proline(in) + H(+)(in) = 4-hydroxy-L-proline(out) + H(+)(out). It carries out the reaction L-serine(in) + H(+)(in) = L-serine(out) + H(+)(out). The catalysed reaction is D-serine(out) + H(+)(out) = D-serine(in) + H(+)(in). It catalyses the reaction beta-alanine(in) + H(+)(in) = beta-alanine(out) + H(+)(out). The enzyme catalyses 4-aminobutanoate(in) + H(+)(in) = 4-aminobutanoate(out) + H(+)(out). It carries out the reaction sarcosine(in) + H(+)(in) = sarcosine(out) + H(+)(out). The catalysed reaction is N,N-dimethylglycine(in) + H(+)(in) = N,N-dimethylglycine(out) + H(+)(out). Inhibited by L- and D-pipecolic acid, nipecotic acid, isonipecotic acid, L- and D-cycloserine, and L-2-azetidine-carboxylate. Functionally, electrogenic proton/amino acid symporter with a high selectivity for the small side chains amino acids glycine, alanine and proline, where both L- and D-enantiomers are transported. Extension of the backbone length, as in beta-alanine and 4-aminobutanoate or methylation of the amino group, as in sarcosine and N,N-dimethylglycine, are also tolerated but decrease transport efficiency. A free carboxyl group is preferred. The sequence is that of Proton-coupled amino acid transporter 2 from Rattus norvegicus (Rat).